The primary structure comprises 266 residues: Potassium/proton antiporter CemA (266 aa).

Transmembrane regions (helical) follow at residues 46-66, 151-171, and 226-246; these read VIVSVRCLITLIFVPLFINIL, FLSFLSLSVVFLLLKPQIIIL, and FMSLFVATFPVFLDTVFKYWI.

It belongs to the CemA family.

The protein localises to the plastid. The protein resides in the chloroplast inner membrane. It carries out the reaction K(+)(in) + H(+)(out) = K(+)(out) + H(+)(in). Contributes to K(+)/H(+) antiport activity by supporting proton efflux to control proton extrusion and homeostasis in chloroplasts in a light-dependent manner to modulate photosynthesis. Prevents excessive induction of non-photochemical quenching (NPQ) under continuous-light conditions. Indirectly promotes efficient inorganic carbon uptake into chloroplasts. The polypeptide is Potassium/proton antiporter CemA (Chlorella vulgaris (Green alga)).